The primary structure comprises 2230 residues: Golgin subfamily A member 4 (2230 aa).

Residues 1 to 64 (MFKKLKQKIS…SGDTQSFAQK (64 aa)) are disordered. Residue S10 is modified to Phosphoserine. Low complexity predominate over residues 12–41 (EQQQLQQALAPAQASSNSSTPTRMRSRTSS). T39 carries the post-translational modification Phosphothreonine. Phosphoserine is present on residues S41, S71, S78, and S89. A compositionally biased stretch (basic and acidic residues) spans 87-107 (SSSKESLVRTSSRESLNRLDL). The disordered stretch occupies residues 87 to 127 (SSSKESLVRTSSRESLNRLDLDSSTASFDPPSDMDSEAEDL). The interaction with MACF1 stretch occupies residues 133–203 (SLNKEQLIQR…EELQMDQQAK (71 aa)). Positions 133–2185 (SLNKEQLIQR…EYLRKVLFEY (2053 aa)) form a coiled coil. S266 bears the Phosphoserine mark. 2 N-linked (GlcNAc...) asparagine glycosylation sites follow: N585 and N1612. A GRIP domain is found at 2168-2215 (LFGEPTEFEYLRKVLFEYMMGRETKTMAKVITTVLKFPDDQTQKILER). Residue T2223 is modified to Phosphothreonine.

As to quaternary structure, homodimer. Interacts with RAB6A. Interacts with GTP-bound ARL1 and ARL3. Interacts with MACF1. Directly interacts with TBC1D23. Interacts with FAM91A1; this interaction may be mediated by TBC1D23.

The protein resides in the cytoplasm. The protein localises to the golgi apparatus membrane. Its subcellular location is the golgi apparatus. It is found in the trans-Golgi network membrane. Its function is as follows. Involved in vesicular trafficking at the Golgi apparatus level. May play a role in delivery of transport vesicles containing GPI-linked proteins from the trans-Golgi network through its interaction with MACF1. Involved in endosome-to-Golgi trafficking. This chain is Golgin subfamily A member 4 (GOLGA4), found in Homo sapiens (Human).